The primary structure comprises 434 residues: Enolase (434 aa).

Position 167 (Gln-167) interacts with (2R)-2-phosphoglycerate. Residue Glu-209 is the Proton donor of the active site. Mg(2+)-binding residues include Asp-246, Glu-291, and Asp-318. Lys-343, Arg-372, Ser-373, and Lys-394 together coordinate (2R)-2-phosphoglycerate. Residue Lys-343 is the Proton acceptor of the active site.

It belongs to the enolase family. As to quaternary structure, component of the RNA degradosome, a multiprotein complex involved in RNA processing and mRNA degradation. Mg(2+) is required as a cofactor.

The protein localises to the cytoplasm. It localises to the secreted. The protein resides in the cell surface. It catalyses the reaction (2R)-2-phosphoglycerate = phosphoenolpyruvate + H2O. Its pathway is carbohydrate degradation; glycolysis; pyruvate from D-glyceraldehyde 3-phosphate: step 4/5. Its function is as follows. Catalyzes the reversible conversion of 2-phosphoglycerate (2-PG) into phosphoenolpyruvate (PEP). It is essential for the degradation of carbohydrates via glycolysis. The protein is Enolase of Buchnera aphidicola subsp. Acyrthosiphon pisum (strain APS) (Acyrthosiphon pisum symbiotic bacterium).